Consider the following 522-residue polypeptide: tRNA-2-methylthio-N(6)-dimethylallyladenosine synthase (522 aa).

Over residues 1–26 (MSLTIPSPASGTSTSATTDTAPAAAP) the composition is skewed to low complexity. Positions 1-27 (MSLTIPSPASGTSTSATTDTAPAAAPQ) are disordered. The region spanning 28–143 (RTYQVRTFGC…LPALLDRARH (116 aa)) is the MTTase N-terminal domain. The [4Fe-4S] cluster site is built by C37, C72, C106, C180, C184, and C187. Residues 166-396 (RDSVYSGWVS…TALQDRIAAE (231 aa)) form the Radical SAM core domain. One can recognise a TRAM domain in the interval 399–469 (ARQLGRRVEV…AFHLVADPAS (71 aa)). A disordered region spans residues 481–522 (GDAWDRSQADSCGAPVAGGGAGSNGGKGGVSLGMPALPVRRS). Residues 496–511 (VAGGGAGSNGGKGGVS) are compositionally biased toward gly residues.

Belongs to the methylthiotransferase family. MiaB subfamily. Monomer. The cofactor is [4Fe-4S] cluster.

The protein localises to the cytoplasm. It carries out the reaction N(6)-dimethylallyladenosine(37) in tRNA + (sulfur carrier)-SH + AH2 + 2 S-adenosyl-L-methionine = 2-methylsulfanyl-N(6)-dimethylallyladenosine(37) in tRNA + (sulfur carrier)-H + 5'-deoxyadenosine + L-methionine + A + S-adenosyl-L-homocysteine + 2 H(+). In terms of biological role, catalyzes the methylthiolation of N6-(dimethylallyl)adenosine (i(6)A), leading to the formation of 2-methylthio-N6-(dimethylallyl)adenosine (ms(2)i(6)A) at position 37 in tRNAs that read codons beginning with uridine. The sequence is that of tRNA-2-methylthio-N(6)-dimethylallyladenosine synthase from Arthrobacter sp. (strain FB24).